The following is a 56-amino-acid chain: Large ribosomal subunit protein eL40 (56 aa).

The protein belongs to the eukaryotic ribosomal protein eL40 family.

This Metallosphaera sedula (strain ATCC 51363 / DSM 5348 / JCM 9185 / NBRC 15509 / TH2) protein is Large ribosomal subunit protein eL40.